Consider the following 508-residue polypeptide: MFS-type transporter penM (508 aa).

The interval methionine 1–leucine 60 is disordered. A compositionally biased stretch (basic and acidic residues) spans aspartate 35 to asparagine 46. The N-linked (GlcNAc...) asparagine glycan is linked to asparagine 61. A helical transmembrane segment spans residues serine 73–glycine 93. Residue asparagine 100 is glycosylated (N-linked (GlcNAc...) asparagine). 6 helical membrane passes run serine 108–leucine 128, isoleucine 143–valine 163, phenylalanine 166–methionine 186, alanine 197–leucine 217, tryptophan 225–isoleucine 245, and proline 299–phenylalanine 319. The Peroxisomal targeting signal signature appears at lysine 293–tyrosine 307. N-linked (GlcNAc...) asparagine glycosylation is present at asparagine 331. The next 5 helical transmembrane spans lie at glycine 335–isoleucine 355, leucine 379–threonine 399, isoleucine 407–valine 427, phenylalanine 435–leucine 457, and serine 475–glycine 495.

This sequence belongs to the major facilitator superfamily.

Its subcellular location is the peroxisome membrane. Its function is as follows. MFS-type transporter involved in penicillin production, most likely through the translocation of isopenicillin N from the cytosol to the peroxisomal lumen across the peroxisomal membrane. The chain is MFS-type transporter penM from Penicillium rubens (strain ATCC 28089 / DSM 1075 / NRRL 1951 / Wisconsin 54-1255) (Penicillium chrysogenum).